The sequence spans 222 residues: Thiamine-phosphate synthase (222 aa).

Residues 40-44 and asparagine 81 contribute to the 4-amino-2-methyl-5-(diphosphooxymethyl)pyrimidine site; that span reads QLRDK. Residues aspartate 82 and aspartate 101 each coordinate Mg(2+). Residue serine 120 participates in 4-amino-2-methyl-5-(diphosphooxymethyl)pyrimidine binding. 146 to 148 contacts 2-[(2R,5Z)-2-carboxy-4-methylthiazol-5(2H)-ylidene]ethyl phosphate; sequence TPT. Position 149 (lysine 149) interacts with 4-amino-2-methyl-5-(diphosphooxymethyl)pyrimidine. Glycine 178 contacts 2-[(2R,5Z)-2-carboxy-4-methylthiazol-5(2H)-ylidene]ethyl phosphate.

It belongs to the thiamine-phosphate synthase family. Requires Mg(2+) as cofactor.

The enzyme catalyses 2-[(2R,5Z)-2-carboxy-4-methylthiazol-5(2H)-ylidene]ethyl phosphate + 4-amino-2-methyl-5-(diphosphooxymethyl)pyrimidine + 2 H(+) = thiamine phosphate + CO2 + diphosphate. It carries out the reaction 2-(2-carboxy-4-methylthiazol-5-yl)ethyl phosphate + 4-amino-2-methyl-5-(diphosphooxymethyl)pyrimidine + 2 H(+) = thiamine phosphate + CO2 + diphosphate. It catalyses the reaction 4-methyl-5-(2-phosphooxyethyl)-thiazole + 4-amino-2-methyl-5-(diphosphooxymethyl)pyrimidine + H(+) = thiamine phosphate + diphosphate. It participates in cofactor biosynthesis; thiamine diphosphate biosynthesis; thiamine phosphate from 4-amino-2-methyl-5-diphosphomethylpyrimidine and 4-methyl-5-(2-phosphoethyl)-thiazole: step 1/1. Condenses 4-methyl-5-(beta-hydroxyethyl)thiazole monophosphate (THZ-P) and 2-methyl-4-amino-5-hydroxymethyl pyrimidine pyrophosphate (HMP-PP) to form thiamine monophosphate (TMP). The protein is Thiamine-phosphate synthase of Mycobacterium tuberculosis (strain ATCC 25177 / H37Ra).